The sequence spans 39 residues: Cytochrome b559 subunit beta (39 aa).

Residues W14–A30 traverse the membrane as a helical segment. H18 is a heme binding site.

It belongs to the PsbE/PsbF family. In terms of assembly, heterodimer of an alpha subunit and a beta subunit. PSII is composed of 1 copy each of membrane proteins PsbA, PsbB, PsbC, PsbD, PsbE, PsbF, PsbH, PsbI, PsbJ, PsbK, PsbL, PsbM, PsbT, PsbX, PsbY, PsbZ, Psb30/Ycf12, at least 3 peripheral proteins of the oxygen-evolving complex and a large number of cofactors. It forms dimeric complexes. The cofactor is heme b.

The protein localises to the plastid. It is found in the chloroplast thylakoid membrane. In terms of biological role, this b-type cytochrome is tightly associated with the reaction center of photosystem II (PSII). PSII is a light-driven water:plastoquinone oxidoreductase that uses light energy to abstract electrons from H(2)O, generating O(2) and a proton gradient subsequently used for ATP formation. It consists of a core antenna complex that captures photons, and an electron transfer chain that converts photonic excitation into a charge separation. The chain is Cytochrome b559 subunit beta from Physcomitrium patens (Spreading-leaved earth moss).